The sequence spans 100 residues: Urease subunit gamma (100 aa).

Belongs to the urease gamma subunit family. In terms of assembly, heterotrimer of UreA (gamma), UreB (beta) and UreC (alpha) subunits. Three heterotrimers associate to form the active enzyme.

Its subcellular location is the cytoplasm. It catalyses the reaction urea + 2 H2O + H(+) = hydrogencarbonate + 2 NH4(+). Its pathway is nitrogen metabolism; urea degradation; CO(2) and NH(3) from urea (urease route): step 1/1. The sequence is that of Urease subunit gamma from Burkholderia cenocepacia (strain ATCC BAA-245 / DSM 16553 / LMG 16656 / NCTC 13227 / J2315 / CF5610) (Burkholderia cepacia (strain J2315)).